Here is a 151-residue protein sequence, read N- to C-terminus: Small ribosomal subunit protein uS15 (151 aa).

It belongs to the universal ribosomal protein uS15 family.

The polypeptide is Small ribosomal subunit protein uS15 (RPS13) (Pisum sativum (Garden pea)).